Here is a 367-residue protein sequence, read N- to C-terminus: GMP synthase [glutamine-hydrolyzing] subunit B (367 aa).

The GMPS ATP-PPase domain occupies 2–190 (FDPASFVEEI…LKLPKEISER (189 aa)). 29-35 (SGGVDST) contacts ATP.

In terms of assembly, heterodimer composed of a glutamine amidotransferase subunit (A) and a GMP-binding subunit (B).

The catalysed reaction is XMP + L-glutamine + ATP + H2O = GMP + L-glutamate + AMP + diphosphate + 2 H(+). It participates in purine metabolism; GMP biosynthesis; GMP from XMP (L-Gln route): step 1/1. Catalyzes the synthesis of GMP from XMP. The sequence is that of GMP synthase [glutamine-hydrolyzing] subunit B (guaAB) from Saccharolobus solfataricus (strain ATCC 35092 / DSM 1617 / JCM 11322 / P2) (Sulfolobus solfataricus).